The chain runs to 235 residues: Large ribosomal subunit protein uL1 (235 aa).

This sequence belongs to the universal ribosomal protein uL1 family. In terms of assembly, part of the 50S ribosomal subunit.

Its function is as follows. Binds directly to 23S rRNA. The L1 stalk is quite mobile in the ribosome, and is involved in E site tRNA release. Functionally, protein L1 is also a translational repressor protein, it controls the translation of the L11 operon by binding to its mRNA. In Mycolicibacterium vanbaalenii (strain DSM 7251 / JCM 13017 / BCRC 16820 / KCTC 9966 / NRRL B-24157 / PYR-1) (Mycobacterium vanbaalenii), this protein is Large ribosomal subunit protein uL1.